A 471-amino-acid chain; its full sequence is UDP-N-acetylmuramate--L-alanine ligase (471 aa).

122 to 128 (GTHGKTT) contacts ATP.

Belongs to the MurCDEF family.

It localises to the cytoplasm. The enzyme catalyses UDP-N-acetyl-alpha-D-muramate + L-alanine + ATP = UDP-N-acetyl-alpha-D-muramoyl-L-alanine + ADP + phosphate + H(+). Its pathway is cell wall biogenesis; peptidoglycan biosynthesis. Cell wall formation. In Cutibacterium acnes (strain DSM 16379 / KPA171202) (Propionibacterium acnes), this protein is UDP-N-acetylmuramate--L-alanine ligase.